We begin with the raw amino-acid sequence, 558 residues long: DEAD-box ATP-dependent RNA helicase 49 (558 aa).

Positions 16–44 (FSELKPPLSEDIIEALDRSGFEVCTPVQA) match the Q motif motif. One can recognise a Helicase ATP-binding domain in the interval 47–226 (IPFLCSHKDV…KAGLRNAMEV (180 aa)). 60-67 (AATGSGKT) serves as a coordination point for ATP. The DEAD box signature appears at 174-177 (DEAD). In terms of domain architecture, Helicase C-terminal spans 255 to 402 (QLVHLLIENK…ERKCSENASD (148 aa)). Positions 506 to 558 (KDKLQQEKRGKRKKSSKEAVDDSNKASRKRKLTGRQRQTIQTAQDEEEMNLRL) are disordered. Positions 521–530 (SKEAVDDSNK) are enriched in basic and acidic residues. Over residues 549 to 558 (QDEEEMNLRL) the composition is skewed to acidic residues.

This sequence belongs to the DEAD box helicase family. DDX55/SPB4 subfamily.

The enzyme catalyses ATP + H2O = ADP + phosphate + H(+). In Arabidopsis thaliana (Mouse-ear cress), this protein is DEAD-box ATP-dependent RNA helicase 49 (RH49).